Here is a 551-residue protein sequence, read N- to C-terminus: Cation/acetate symporter ActP (551 aa).

Transmembrane regions (helical) follow at residues 8–28 (ALAA…TGAV), 35–55 (WQAI…TYWA), 78–98 (GLAI…SALV), 105–125 (GLIY…LIAE), 151–171 (LSAC…MVGA), 185–205 (VAVV…GMLA), 208–228 (WVQI…AFMV), 264–284 (ISAL…PHIL), 305–325 (GFMG…IMLV), 357–377 (LFLG…VAGL), 406–426 (VSKI…ILFE), 430–450 (IAFM…PIIL), 465–485 (VGGW…PTIW), and 496–516 (FPYE…IWVF).

Belongs to the sodium:solute symporter (SSF) (TC 2.A.21) family.

It localises to the cell inner membrane. Its function is as follows. Transports acetate. In Klebsiella pneumoniae (strain 342), this protein is Cation/acetate symporter ActP.